The chain runs to 657 residues: Pyoverdine export ATP-binding/permease protein PvdT (657 aa).

Residues 6–245 (IDLRNIRKSY…LSANAGALQA (240 aa)) enclose the ABC transporter domain. ATP is bound at residue 43–50 (GASGSGKS). Helical transmembrane passes span 285–305 (ALTL…LAVG), 532–552 (LSLM…IGVM), 590–610 (LSVV…GILI), and 620–640 (LAAV…FGFM).

It belongs to the ABC transporter superfamily. Macrolide exporter (TC 3.A.1.122) family. Part of the tripartite efflux system PvdRT-OpmQ, which is composed of an inner membrane component with both ATPase and permease domains, PvdT, a periplasmic membrane fusion protein, PvdR, and an outer membrane component, OpmQ.

The protein resides in the cell inner membrane. In terms of biological role, part of the tripartite efflux system PvdRT-OpmQ required for the secretion into the extracellular milieu of the siderophore pyoverdine (PVD), which is involved in iron acquisition. This subunit binds PVD and drives its secretion by hydrolyzing ATP. The system is responsible for export of newly synthesized PVD after the final steps of biosynthesis have taken place in the periplasm. It is also responsible for recycling of PVD after internalization of ferri-PVD into the periplasm by the outer-membrane receptor FpvA and release of iron from PVD, thus making PVD available for new cycles of iron uptake. The sequence is that of Pyoverdine export ATP-binding/permease protein PvdT from Pseudomonas fluorescens (strain ATCC BAA-477 / NRRL B-23932 / Pf-5).